The following is a 224-amino-acid chain: Phosphoglycolate phosphatase (224 aa).

The Nucleophile role is filled by D8. Mg(2+) is bound by residues D8, D10, G11, and G43. K151 lines the substrate pocket. Mg(2+)-binding residues include D174, S175, and D178.

The protein belongs to the HAD-like hydrolase superfamily. Archaeal SPP-like hydrolase family. As to quaternary structure, homodimer. The cofactor is Mg(2+).

It carries out the reaction 2-phosphoglycolate + H2O = glycolate + phosphate. With respect to regulation, inhibited by Ca(2+) ions and by high chloride ion concentration. By contrast, low chloride concentration (up to 50 mM) slightly activate the enzyme. Its function is as follows. Catalyzes the dephosphorylation of 2-phosphoglycolate. Also has significant, but less efficient, pyrophosphatase activity, since it is able to catalyze the release of phosphate from inorganic pyrophosphate (PPi). This is Phosphoglycolate phosphatase from Thermoplasma acidophilum (strain ATCC 25905 / DSM 1728 / JCM 9062 / NBRC 15155 / AMRC-C165).